The chain runs to 296 residues: MIYLHAIDPIAFSLGPVQVHWYGLMYLAAFFSAWALGRSRILRGRLPGVDMDGFSDLLFYGMLGVVLGGRIGYMLFYAFDTFLANPLILFKVWEGGMSFHGGLLGVLIACGLWTRRHRLHFFDVMDFVAPLVPLGLGFGRLGNFVGGELWGKFTQAGWGVIFPHAPELADWPPAQLQAQYAAGALDRFARHPSQLYEAALEGVVMFVVLWTFSMKPRARYAVSGLFALLYGVFRFIVEFVRVPDAPLGYLAFNWLTMGQILSLPLIGVGLVLLALSRRAPVLQPVVPAAAGVEAAK.

Helical transmembrane passes span 10-30 (IAFS…LAAF), 57-77 (LLFY…MLFY), 92-112 (VWEG…ACGL), and 119-139 (LHFF…LGFG). Arg140 serves as a coordination point for a 1,2-diacyl-sn-glycero-3-phospho-(1'-sn-glycerol). Helical transmembrane passes span 194–214 (QLYE…TFSM), 220–240 (YAVS…VEFV), and 255–275 (LTMG…LLAL).

This sequence belongs to the Lgt family.

It is found in the cell inner membrane. It carries out the reaction L-cysteinyl-[prolipoprotein] + a 1,2-diacyl-sn-glycero-3-phospho-(1'-sn-glycerol) = an S-1,2-diacyl-sn-glyceryl-L-cysteinyl-[prolipoprotein] + sn-glycerol 1-phosphate + H(+). The protein operates within protein modification; lipoprotein biosynthesis (diacylglyceryl transfer). In terms of biological role, catalyzes the transfer of the diacylglyceryl group from phosphatidylglycerol to the sulfhydryl group of the N-terminal cysteine of a prolipoprotein, the first step in the formation of mature lipoproteins. The sequence is that of Phosphatidylglycerol--prolipoprotein diacylglyceryl transferase from Xanthomonas campestris pv. campestris (strain 8004).